The primary structure comprises 552 residues: uncharacterized protein (552 aa).

One can recognise a DhaL domain in the interval 8–200 (KLFADMIIQG…LLCVYEGFLK (193 aa)).

This is an uncharacterized protein from Staphylococcus epidermidis (strain ATCC 35984 / DSM 28319 / BCRC 17069 / CCUG 31568 / BM 3577 / RP62A).